We begin with the raw amino-acid sequence, 347 residues long: DNA-directed RNA polymerase subunit alpha (347 aa).

The segment at 1-230 (MFKGFQKPKR…DHMTIFINFE (230 aa)) is alpha N-terminal domain (alpha-NTD). An alpha C-terminal domain (alpha-CTD) region spans residues 247 to 347 (MNEVLNRSVE…EDDGQDQIGE (101 aa)). The interval 320-347 (GRLVAPPPSAGGGPDFGPEDDGQDQIGE) is disordered. Positions 336–347 (GPEDDGQDQIGE) are enriched in acidic residues.

Belongs to the RNA polymerase alpha chain family. In terms of assembly, homodimer. The RNAP catalytic core consists of 2 alpha, 1 beta, 1 beta' and 1 omega subunit. When a sigma factor is associated with the core the holoenzyme is formed, which can initiate transcription.

The enzyme catalyses RNA(n) + a ribonucleoside 5'-triphosphate = RNA(n+1) + diphosphate. DNA-dependent RNA polymerase catalyzes the transcription of DNA into RNA using the four ribonucleoside triphosphates as substrates. The chain is DNA-directed RNA polymerase subunit alpha from Solibacter usitatus (strain Ellin6076).